A 410-amino-acid polypeptide reads, in one-letter code: Lipoyl synthase, mitochondrial (410 aa).

The N-terminal 29 residues, 1-29, are a transit peptide targeting the mitochondrion; the sequence is MASTTVCSAARIRVASSQVLRSIANTRTY. Polar residues predominate over residues 29–39; the sequence is YATTSPESSIP. The interval 29-49 is disordered; it reads YATTSPESSIPETKPTAKRTP. 7 residues coordinate [4Fe-4S] cluster: Cys-129, Cys-134, Cys-140, Cys-160, Cys-164, Cys-167, and Ser-375. In terms of domain architecture, Radical SAM core spans 143–364; that stretch reads GGSKAAATAT…KEKAMEMGFL (222 aa).

This sequence belongs to the radical SAM superfamily. Lipoyl synthase family. It depends on [4Fe-4S] cluster as a cofactor.

The protein localises to the mitochondrion. It catalyses the reaction [[Fe-S] cluster scaffold protein carrying a second [4Fe-4S](2+) cluster] + N(6)-octanoyl-L-lysyl-[protein] + 2 oxidized [2Fe-2S]-[ferredoxin] + 2 S-adenosyl-L-methionine + 4 H(+) = [[Fe-S] cluster scaffold protein] + N(6)-[(R)-dihydrolipoyl]-L-lysyl-[protein] + 4 Fe(3+) + 2 hydrogen sulfide + 2 5'-deoxyadenosine + 2 L-methionine + 2 reduced [2Fe-2S]-[ferredoxin]. Its pathway is protein modification; protein lipoylation via endogenous pathway; protein N(6)-(lipoyl)lysine from octanoyl-[acyl-carrier-protein]: step 2/2. In terms of biological role, catalyzes the radical-mediated insertion of two sulfur atoms into the C-6 and C-8 positions of the octanoyl moiety bound to the lipoyl domains of lipoate-dependent enzymes, thereby converting the octanoylated domains into lipoylated derivatives. The protein is Lipoyl synthase, mitochondrial of Arthroderma otae (strain ATCC MYA-4605 / CBS 113480) (Microsporum canis).